The sequence spans 372 residues: Alpha-parvin (372 aa).

Residues 1–11 (MATSPQKSPSV) are compositionally biased toward low complexity. The tract at residues 1–45 (MATSPQKSPSVPKSPTPKSPPSRKKDDSFLGKLGGTLARRKKAKE) is disordered. Ala-2 carries the post-translational modification N-acetylalanine. 3 positions are modified to phosphoserine: Ser-8, Ser-14, and Ser-19. The interaction with ARHGAP31 stretch occupies residues 21 to 25 (PSRKK). Residues Ser-28 and Ser-62 each carry the phosphoserine modification. Calponin-homology (CH) domains are found at residues 95 to 202 (QELM…QYFR) and 262 to 369 (NVVK…TKYR). The tract at residues 223 to 372 (GILQSRQIQE…NLFTKYRNVE (150 aa)) is required for interaction with TESK1 and ILK.

It belongs to the parvin family. Component of the heterotrimeric IPP (ILK-PINCH-PARVIN) complex composed of ILK, LIMS1/PINCH and PARVA; the complex binds to F-actin via the C-terminal tail of LIMS1 and the N-terminal region of PARVA, promoting F-actin filament bundling. Formation of the IPP complex is dependent on protein kinase C and precedes integrin-mediated cell adhesion and spreading. Interacts with TGFB1I1. Interacts with ARHGAP31. Interacts with the actin cytoskeleton. Interacts (via C-terminus) with TESK1 (via C-terminus); the interaction inhibits TESK1 kinase activity. Interacts with PXN/PAXILLIN (via LD motif 4). In terms of tissue distribution, widely expressed, with highest levels in heart, skeletal muscle, kidney and liver.

It localises to the cell junction. The protein localises to the focal adhesion. Its subcellular location is the cell membrane. It is found in the cytoplasm. The protein resides in the cytoskeleton. It localises to the myofibril. The protein localises to the sarcomere. Its subcellular location is the z line. In terms of biological role, plays a role in sarcomere organization and in smooth muscle cell contraction. Required for normal development of the embryonic cardiovascular system, and for normal septation of the heart outflow tract. Plays a role in sprouting angiogenesis and is required for normal adhesion of vascular smooth muscle cells to endothelial cells during blood vessel development. Plays a role in the reorganization of the actin cytoskeleton, formation of lamellipodia and ciliogenesis. Plays a role in the establishment of cell polarity, cell adhesion, cell spreading, and directed cell migration. Within the IPP (ILK-PINCH-PARVIN) complex, binds to F-actin, promoting F-actin bundling, a process required to generate force for actin cytoskeleton reorganization and subsequent dynamic cell adhesion events such as cell spreading and migration. The sequence is that of Alpha-parvin (PARVA) from Homo sapiens (Human).